Here is a 514-residue protein sequence, read N- to C-terminus: Synaptic vesicular amine transporter (514 aa).

At 1-20 the chain is on the cytoplasmic side; it reads MALSELALVRWLQESRRSRK. A helical transmembrane segment spans residues 21-41; sequence LILFIVFLALLLDNMLLTVVV. Residues 42 to 129 lie on the Lumenal, vesicle side of the membrane; that stretch reads PIIPSYLYSI…EDKDLLNENV (88 aa). N-linked (GlcNAc...) asparagine glycosylation is found at asparagine 84 and asparagine 91. The cysteines at positions 117 and 324 are disulfide-linked. Residues 130–150 form a helical membrane-spanning segment; it reads QVGLLFASKATVQLITNPFIG. The Cytoplasmic segment spans residues 151 to 159; the sequence is LLTNRIGYP. A helical membrane pass occupies residues 160-180; it reads IPIFAGFCIMFVSTIMFAFSS. Residues 181-189 lie on the Lumenal, vesicle side of the membrane; it reads SYAFLLIAR. Residues 190-210 traverse the membrane as a helical segment; it reads SLQGIGSSCSSVAGMGMLASV. At 211–219 the chain is on the cytoplasmic side; that stretch reads YTDDEERGN. The chain crosses the membrane as a helical span at residues 220–242; sequence VMGIALGGLAMGVLVGPPFGSVL. Residues leucine 228 and valine 232 each coordinate serotonin. At 243-248 the chain is on the lumenal, vesicle side; sequence YEFVGK. A helical transmembrane segment spans residues 249-271; the sequence is TAPFLVLAALVLLDGAIQLFVLQ. Residues 272–291 are Cytoplasmic-facing; the sequence is PSRVQPESQKGTPLTTLLKD. Residues 292-311 traverse the membrane as a helical segment; the sequence is PYILIAAGSICFANMGIAML. The serotonin site is built by asparagine 305, isoleucine 308, glutamate 312, phenylalanine 334, and tyrosine 341. Residues 312-328 are Lumenal, vesicle-facing; that stretch reads EPALPIWMMETMCSRKW. The chain crosses the membrane as a helical span at residues 329–352; sequence QLGVAFLPASISYLIGTNIFGILA. Topologically, residues 353–357 are cytoplasmic; it reads HKMGR. The helical transmembrane segment at 358 to 378 threads the bilayer; it reads WLCALLGMIIVGVSILCIPFA. Residues 379 to 389 are Lumenal, vesicle-facing; sequence KNIYGLIAPNF. A helical transmembrane segment spans residues 390-410; sequence GVGFAIGMVDSSMMPIMGYLV. Serotonin is bound at residue aspartate 399. Residues 411 to 414 are Cytoplasmic-facing; the sequence is DLRH. A helical membrane pass occupies residues 415–435; the sequence is VSVYGSVYAIADVAFCMGYAI. Tyrosine 433 lines the serotonin pocket. Topologically, residues 436-440 are lumenal, vesicle; that stretch reads GPSAG. The helical transmembrane segment at 441-462 threads the bilayer; the sequence is GAIAKAIGFPWLMTIIGIIDIL. Topologically, residues 463-514 are cytoplasmic; that stretch reads FAPLCFFLRSPPAKEEKMAILMDHNCPIKTKMYTQNNIQSYPIGEDEESESD. A phosphoserine mark is found at serine 511 and serine 513.

The protein belongs to the major facilitator superfamily. Vesicular transporter family. In terms of assembly, interacts with SLC6A3. Expressed in neuronal and neuroendocrine tissues. Detected in central and peripheral nervous system in particular in axonal and dendritic processes in dopaminergic cells of substantia nigra, histaminergic neuronal cell bodies of substantia nigra and tuberomammillary nucleus, in ganglion cells of sympathetic glia and in peripheral sympathetic nerve terminals in stomach and duodenum (at protein level). Highly expressed in chromaffin cells of the adrenal medulla and histamine-storing enterochromaffin-like cells of oxyntic mucosa (at protein level).

It is found in the cytoplasmic vesicle. The protein localises to the secretory vesicle. The protein resides in the synaptic vesicle membrane. Its subcellular location is the secretory vesicle membrane. It localises to the cell projection. It is found in the axon. The protein localises to the dendrite. It catalyses the reaction serotonin(in) + 2 H(+)(out) = serotonin(out) + 2 H(+)(in). The enzyme catalyses dopamine(in) + 2 H(+)(out) = dopamine(out) + 2 H(+)(in). The catalysed reaction is histamine(in) + 2 H(+)(out) = histamine(out) + 2 H(+)(in). Its activity is regulated as follows. Strongly inhibited by reserpine and tetrabenazine. Also inhibited to a lesser extent by ketanserin and fenfluramine. Reserpine and ketanserin inhibit by blocking the substrate-binding pocket. Tetrabenazine traps SLC18A2/VMAT2 in an occluded conformation and its inhibition is specific to SLC18A2/VMAT2 but not SLC18A1/VMAT1. Functionally, electrogenic antiporter that exchanges one cationic monoamine with two intravesicular protons across the membrane of secretory and synaptic vesicles. Uses the electrochemical proton gradient established by the V-type proton-pump ATPase to accumulate high concentrations of monoamines inside the vesicles prior to their release via exocytosis. Transports a variety of catecholamines such as dopamine, adrenaline and noradrenaline, histamine, and indolamines such as serotonin. Regulates the transvesicular monoaminergic gradient that determines the quantal size. Mediates somatodendritic dopamine release in hippocampal neurons, likely as part of a regulated secretory pathway that integrates retrograde synaptic signals. Acts as a primary transporter for striatal dopamine loading ensuring impulse-dependent release of dopamine at the synaptic cleft. Responsible for histamine and serotonin storage and subsequent corelease from mast cell granules. This chain is Synaptic vesicular amine transporter (SLC18A2), found in Homo sapiens (Human).